Consider the following 667-residue polypeptide: Glycine--tRNA ligase beta subunit (667 aa).

It belongs to the class-II aminoacyl-tRNA synthetase family. In terms of assembly, tetramer of two alpha and two beta subunits.

It is found in the cytoplasm. It carries out the reaction tRNA(Gly) + glycine + ATP = glycyl-tRNA(Gly) + AMP + diphosphate. The protein is Glycine--tRNA ligase beta subunit of Rickettsia canadensis (strain McKiel).